The primary structure comprises 558 residues: Formate--tetrahydrofolate ligase (558 aa).

ATP is bound at residue 66-73 (TPAGEGKT).

It belongs to the formate--tetrahydrofolate ligase family.

The catalysed reaction is (6S)-5,6,7,8-tetrahydrofolate + formate + ATP = (6R)-10-formyltetrahydrofolate + ADP + phosphate. Its pathway is one-carbon metabolism; tetrahydrofolate interconversion. The sequence is that of Formate--tetrahydrofolate ligase from Neisseria meningitidis serogroup B (strain ATCC BAA-335 / MC58).